A 173-amino-acid polypeptide reads, in one-letter code: Crossover junction endodeoxyribonuclease RuvC (173 aa).

Residues Asp-8, Glu-67, and Asp-139 contribute to the active site. Mg(2+)-binding residues include Asp-8, Glu-67, and Asp-139.

This sequence belongs to the RuvC family. In terms of assembly, homodimer which binds Holliday junction (HJ) DNA. The HJ becomes 2-fold symmetrical on binding to RuvC with unstacked arms; it has a different conformation from HJ DNA in complex with RuvA. In the full resolvosome a probable DNA-RuvA(4)-RuvB(12)-RuvC(2) complex forms which resolves the HJ. Requires Mg(2+) as cofactor.

Its subcellular location is the cytoplasm. The catalysed reaction is Endonucleolytic cleavage at a junction such as a reciprocal single-stranded crossover between two homologous DNA duplexes (Holliday junction).. The RuvA-RuvB-RuvC complex processes Holliday junction (HJ) DNA during genetic recombination and DNA repair. Endonuclease that resolves HJ intermediates. Cleaves cruciform DNA by making single-stranded nicks across the HJ at symmetrical positions within the homologous arms, yielding a 5'-phosphate and a 3'-hydroxyl group; requires a central core of homology in the junction. The consensus cleavage sequence is 5'-(A/T)TT(C/G)-3'. Cleavage occurs on the 3'-side of the TT dinucleotide at the point of strand exchange. HJ branch migration catalyzed by RuvA-RuvB allows RuvC to scan DNA until it finds its consensus sequence, where it cleaves and resolves the cruciform DNA. The protein is Crossover junction endodeoxyribonuclease RuvC of Citrobacter koseri (strain ATCC BAA-895 / CDC 4225-83 / SGSC4696).